Here is a 392-residue protein sequence, read N- to C-terminus: Heavy metal-associated isoprenylated plant protein 6 (392 aa).

Residues 1–19 (MGEKKEETATKPQGEKKPT) show a composition bias toward basic and acidic residues. Residues 1–22 (MGEKKEETATKPQGEKKPTDGG) form a disordered region. The HMA 1 domain maps to 23–86 (ITTVVMKLDM…KVADKIKRPV (64 aa)). Cd(2+) contacts are provided by C34 and C37. The tract at residues 89 to 157 (VSTVAPPKKE…PPPPKESTVV (69 aa)) is disordered. Residues 106–145 (AEKKPSPAAEEKPAEKKPAAVEKPGEKKEEKKKEEGEKKA) are compositionally biased toward basic and acidic residues. Residues 153 to 216 (ESTVVLKTKL…YLNEKLKRTV (64 aa)) enclose the HMA 2 domain. Cd(2+)-binding residues include C164 and C167. A compositionally biased stretch (basic and acidic residues) spans 258–270 (KKVDGGGEKKKEV). Disordered regions lie at residues 258 to 285 (KKVDGGGEKKKEVAVGGGGGGGGGGGDG) and 350 to 392 (GQGY…CSVM). A compositionally biased stretch (gly residues) spans 272-285 (VGGGGGGGGGGGDG). C389 is modified (cysteine methyl ester). C389 carries the S-farnesyl cysteine lipid modification. Positions 390–392 (SVM) are cleaved as a propeptide — removed in mature form.

This sequence belongs to the HIPP family. Expressed in petioles, hypocotyls, peduncles, vascular bundles and root meristems.

Its subcellular location is the cell membrane. In terms of biological role, heavy-metal-binding protein. Involved in the maintenance of heavy metal homeostasis and/or in detoxification. This Arabidopsis thaliana (Mouse-ear cress) protein is Heavy metal-associated isoprenylated plant protein 6.